The following is a 757-amino-acid chain: Lysyl oxidase homolog 4 (757 aa).

The N-terminal stretch at Met1–Pro25 is a signal peptide. SRCR domains follow at residues Leu33 to His134, Val160 to Val288, Val312 to Asn412, and Val422 to Met530. 17 disulfide bridges follow: Cys59-Cys123, Cys72-Cys133, Cys103-Cys113, Cys192-Cys277, Cys205-Cys287, Cys252-Cys262, Cys337-Cys401, Cys350-Cys411, Cys381-Cys391, Cys451-Cys516, Cys464-Cys529, Cys498-Cys508, Cys559-Cys565, Cys611-Cys659, Cys643-Cys649, Cys671-Cys681, and Cys718-Cys732. Asn199 is a glycosylation site (N-linked (GlcNAc...) asparagine). Residues Pro534–Ser737 form a lysyl-oxidase like region. Residues His612, His614, and His616 each coordinate Cu cation. N-linked (GlcNAc...) asparagine glycosylation is present at Asn630. The lysine tyrosylquinone (Lys-Tyr) cross-link spans Lys639–Tyr675. Tyr675 bears the 2',4',5'-topaquinone mark.

It belongs to the lysyl oxidase family. Cu cation serves as cofactor. The cofactor is lysine tyrosylquinone residue. Post-translationally, the lysine tyrosylquinone cross-link (LTQ) is generated by condensation of the epsilon-amino group of a lysine with a topaquinone produced by oxidation of tyrosine. May be proteolytically cleaved by BMP1.

It localises to the secreted. Its subcellular location is the extracellular space. It carries out the reaction L-lysyl-[protein] + O2 + H2O = (S)-2-amino-6-oxohexanoyl-[protein] + H2O2 + NH4(+). Its function is as follows. Catalyzes the oxidative deamination of lysine and hydroxylysine residues in collagen and elastin, resulting in the formation of covalent cross-linkages, and the stabilization of collagen and elastin fibers. The polypeptide is Lysyl oxidase homolog 4 (Loxl4) (Mus musculus (Mouse)).